The sequence spans 327 residues: Cyclic AMP-responsive element-binding protein 1 (327 aa).

Disordered stretches follow at residues 1-27 (MTME…QMTV) and 94-113 (SEDS…RREI). The region spanning 87–146 (QISTIAESEDSQESVDSVTDSQKRREILSRRPSYRKILNDLSSDAPGVPRIEEEKSEEET) is the KID domain. Ser-119 bears the Phosphoserine; by CaMK1, CaMK2, CaMK4, PKB/AKT1 or PKB/AKT2, RPS6KA3, RPS6KA4, RPS6KA5 and SGK1 mark. Lys-122 participates in a covalent cross-link: Glycyl lysine isopeptide (Lys-Gly) (interchain with G-Cter in SUMO2). The interval 126-151 (DLSSDAPGVPRIEEEKSEEETSAPAI) is disordered. Ser-128 bears the Phosphoserine; by CaMK2 mark. Position 257 is a phosphoserine; by HIPK2 (Ser-257). The region spanning 269 to 327 (ARKREVRLMKNREAARECRRKKKEYVKCLENRVAVLENQNKTLIEELKALKDLYCHKSD) is the bZIP domain. Residues 270–295 (RKREVRLMKNREAARECRRKKKEYVK) form a basic motif region. Glycyl lysine isopeptide (Lys-Gly) (interchain with G-Cter in SUMO1) cross-links involve residues Lys-271 and Lys-290. The leucine-zipper stretch occupies residues 297 to 318 (LENRVAVLENQNKTLIEELKAL).

The protein belongs to the bZIP family. Interacts with PPRC1. Binds DNA as a dimer. This dimer is stabilized by magnesium ions. Interacts, through the bZIP domain, with the coactivators CRTC1/TORC1, CRTC2/TORC2 and CRTC3/TORC3. Interacts (phosphorylated form) with TOX3. When phosphorylated on Ser-119, binds CREBBP. Interacts with ARRB1. Binds to HIPK2. Interacts with SGK1. Interacts with CREBL2; regulates CREB1 phosphorylation, stability and transcriptional activity. Interacts with TSSK4; this interaction facilitates phosphorylation on Ser-119. Forms a complex with KMT2A and CREBBP. Interacts with TOX4; CREB1 is required for full induction of TOX4-dependent activity and the interaction is increased by cAMP and inhibited by insulin. Post-translationally, phosphorylation of Ser-119 allows CREBBP binding. Stimulated by phosphorylation. Phosphorylated Ser-128 can be detected in the suprachiasmatic nucleus (SCN), the amygdala, the cortex, and the hippocampus but not in the striatum nor in the cerebellum. In the SCN, phosphorylation of Ser-128 and Ser-119 are stimulated by light exposure and submitted to circadian oscillations. In the retina, only phosphorylation of Ser-119 can be detected upon light exposure. Phosphorylation of both Ser-119 and Ser-128 in the SCN regulates the activity of CREB and participates in circadian rhythm generation. Phosphorylated upon calcium influx by CaMK4 and CaMK2 on Ser-119. CaMK4 is much more potent than CAMK2 in activating CREB. Phosphorylated by CaMK2 on Ser-128. Phosphorylation of Ser-128 blocks CREB-mediated transcription even when Ser-119 is phosphorylated. Phosphorylated by CaMK1. Phosphorylation of Ser-271 by HIPK2 in response to genotoxic stress promotes CREB1 activity, facilitating the recruitment of the coactivator CBP. Phosphorylated at Ser-119 by RPS6KA3, RPS6KA4 and RPS6KA5 in response to mitogenic or stress stimuli. CREBL2 positively regulates phosphorylation at Ser-119 thereby stimulating CREB1 transcriptional activity. In liver, phosphorylation is induced by fasting or glucagon in a circadian fashion. Phosphorylated by TSSK4 on Ser-119. In terms of processing, sumoylated with SUMO1. Sumoylation on Lys-290, but not on Lys-271, is required for nuclear localization of this protein. Sumoylation is enhanced under hypoxia, promoting nuclear localization and stabilization. Expressed in the heart (at protein level).

It is found in the nucleus. Its function is as follows. Phosphorylation-dependent transcription factor that stimulates transcription upon binding to the DNA cAMP response element (CRE), a sequence present in many viral and cellular promoters. Transcription activation is enhanced by the TORC coactivators which act independently of Ser-119 phosphorylation. Involved in different cellular processes including the synchronization of circadian rhythmicity and the differentiation of adipose cells. Regulates the expression of apoptotic and inflammatory response factors in cardiomyocytes in response to ERFE-mediated activation of AKT signaling. The chain is Cyclic AMP-responsive element-binding protein 1 (Creb1) from Mus musculus (Mouse).